The chain runs to 281 residues: 1-acyl-sn-glycerol-3-phosphate acyltransferase (281 aa).

3 helical membrane passes run 40-60, 71-91, and 110-130; these read IFVC…IMVL, LGNL…GIPI, and ASPI…VGVA. The HXXXXD motif motif lies at 109–114; it reads HASPID.

The protein belongs to the 1-acyl-sn-glycerol-3-phosphate acyltransferase family.

The protein resides in the membrane. The catalysed reaction is a 1-acyl-sn-glycero-3-phosphate + an acyl-CoA = a 1,2-diacyl-sn-glycero-3-phosphate + CoA. It functions in the pathway phospholipid metabolism; CDP-diacylglycerol biosynthesis; CDP-diacylglycerol from sn-glycerol 3-phosphate: step 2/3. Its function is as follows. Converts lysophosphatidic acid (LPA) into phosphatidic acid by incorporating acyl moiety at the 2 position. This enzyme uses erucoyl-CoA as an acyl donor. This chain is 1-acyl-sn-glycerol-3-phosphate acyltransferase, found in Limnanthes alba (White meadowfoam).